The following is a 74-amino-acid chain: Tetrahydromethanopterin S-methyltransferase subunit G (74 aa).

A helical transmembrane segment spans residues 47–67; it reads VGIAYGLAIGFIFVYVLGTVL.

The protein belongs to the MtrG family. As to quaternary structure, the complex is composed of 8 subunits; MtrA, MtrB, MtrC, MtrD, MtrE, MtrF, MtrG and MtrH.

The protein resides in the cell membrane. The catalysed reaction is 5-methyl-5,6,7,8-tetrahydromethanopterin + coenzyme M + 2 Na(+)(in) = 5,6,7,8-tetrahydromethanopterin + methyl-coenzyme M + 2 Na(+)(out). It functions in the pathway one-carbon metabolism; methanogenesis from CO(2); methyl-coenzyme M from 5,10-methylene-5,6,7,8-tetrahydromethanopterin: step 2/2. Functionally, part of a complex that catalyzes the formation of methyl-coenzyme M and tetrahydromethanopterin from coenzyme M and methyl-tetrahydromethanopterin. This is an energy-conserving, sodium-ion translocating step. The polypeptide is Tetrahydromethanopterin S-methyltransferase subunit G (Methanococcus maripaludis (strain DSM 14266 / JCM 13030 / NBRC 101832 / S2 / LL)).